The chain runs to 404 residues: Photosynthetic reaction center cytochrome c subunit (404 aa).

An N-terminal signal peptide occupies residues 1–22 (MSPAQQLTLPAVIVVASVMLLG). Cys23 carries N-palmitoyl cysteine lipidation. Cys23 carries the S-diacylglycerol cysteine lipid modification. Heme-binding residues include Met94, Cys107, Cys110, His111, Met130, His144, Cys152, Cys155, His156, Met236, Cys247, Cys250, His251, Cys307, Cys310, and His311. A disordered region spans residues 346–404 (ASEAAPAAATEAAPEAPAQEVPAAEAVPAAAEPGAAEAAGSVEPAPVEEVAPAPAAQRL).

As to quaternary structure, component of the photosynthetic reaction center composed of protein subunits L (PufL), M (PufM), H (PuhA) and cytochrome C (PufC). The reaction center interacts with light-harvesting antenna complex LH1. Binds 4 heme groups per subunit.

It localises to the cellular chromatophore membrane. The reaction center of purple bacteria contains a tightly bound cytochrome molecule which re-reduces the photo oxidized primary electron donor. In Thermochromatium tepidum (Chromatium tepidum), this protein is Photosynthetic reaction center cytochrome c subunit.